The following is a 131-amino-acid chain: Small ribosomal subunit protein uS8 (131 aa).

This sequence belongs to the universal ribosomal protein uS8 family. In terms of assembly, part of the 30S ribosomal subunit. Contacts proteins S5 and S12.

In terms of biological role, one of the primary rRNA binding proteins, it binds directly to 16S rRNA central domain where it helps coordinate assembly of the platform of the 30S subunit. The chain is Small ribosomal subunit protein uS8 from Chlorobium limicola (strain DSM 245 / NBRC 103803 / 6330).